Reading from the N-terminus, the 215-residue chain is Mediator of RNA polymerase II transcription subunit 20 (215 aa).

It belongs to the Mediator complex subunit 20 family. As to quaternary structure, component of the Mediator complex.

The protein resides in the nucleus. Functionally, component of the Mediator complex, a coactivator involved in the regulated transcription of nearly all RNA polymerase II-dependent genes. Mediator functions as a bridge to convey information from gene-specific regulatory proteins to the basal RNA polymerase II transcription machinery. Mediator is recruited to promoters by direct interactions with regulatory proteins and serves as a scaffold for the assembly of a functional preinitiation complex with RNA polymerase II and the general transcription factors. This Candida glabrata (strain ATCC 2001 / BCRC 20586 / JCM 3761 / NBRC 0622 / NRRL Y-65 / CBS 138) (Yeast) protein is Mediator of RNA polymerase II transcription subunit 20 (SRB2).